Reading from the N-terminus, the 317-residue chain is MIIRFGYVSHATALWDCSPAKTMTFTSWKKLKKQEREDKLYNVTLQNLEHTIRILHYNIAHEIPLYRLSSSIVPLATHPEVEFDYIQIFAPLWRKIGALIQEHNLRVSFHPNQFTLFTSDKPHITTNAITDMTYHYNVLNAMGIADSSYINIHVGGAYGNKEKAIERFHENIQKLPYHIKRQMTLENDDKTYTTSETLAICQKEKIPFVFDYHHHIANLCNEPLEELLPMIFKTWSHTNVLPKVHISSPRSEKEFRAHADYIDLEFIKPFLHITKKINHNFDIMIESKQKDLAMLQLICELSSIRGIKRINSATLQW.

It belongs to the uve1/UvsE family.

In terms of biological role, component in a DNA repair pathway. Removal of UV LIGHT damaged nucleotides. Recognizes pyrimidine dimers and cleave a phosphodiester bond immediately 5' to the lesion. This Bacillus mycoides (strain KBAB4) (Bacillus weihenstephanensis) protein is UV DNA damage endonuclease.